The chain runs to 289 residues: MKIGCHGLVWTGHFDAEGIRYSVQKTREAGFDLVEFPLMDPFSFDVQTAKSALAEHGLAASASLGLSDATDVSSEDPAVVKAGEELLNRAVDVLAELGATDFCGVIYSAMKKYMEPATAAGLANSKAAVGRVADRASDLGINVSLEVVNRYETNVLNTGRQALAYLEELNRPNLGIHLDTYHMNIEESDMFSPILDTAEALRYVHIGESHRGYLGTGSVDFDTFFKALGRIGYDGPVVFESFSSSVVAPDLSRMLGIWRNLWADNEELGAHANAFIRDKLTAIKTIELH.

Residue Glu-146 is the Proton donor/acceptor of the active site. Position 146 (Glu-146) interacts with Mn(2+). Residues Glu-152 and 179–182 (DTYH) each bind substrate. Residues Asp-179 and His-205 each contribute to the Mn(2+) site. Arg-211 lines the substrate pocket. Residue Glu-240 is the Proton donor/acceptor of the active site. Glu-240 serves as a coordination point for Mn(2+).

The protein belongs to the hyi family. In terms of assembly, homotetramer. Mg(2+) serves as cofactor. Mn(2+) is required as a cofactor. The cofactor is Co(2+).

The catalysed reaction is L-ribulose = L-xylulose. It catalyses the reaction D-allulose = keto-D-fructose. It carries out the reaction keto-L-tagatose = keto-L-sorbose. The enzyme catalyses D-ribulose = D-xylulose. The catalysed reaction is L-allulose = keto-L-fructose. It catalyses the reaction keto-D-tagatose = keto-D-sorbose. In terms of biological role, catalyzes the reversible C-3 epimerization of several ketoses. Shows the highest enzymatic activity for the epimerization of L-ribulose to L-xylulose. Is also able to convert D-allulose (also known as D-psicose) to D-fructose and, to a lesser extent, L-tagatose to L-sorbose, D-ribulose to D-xylulose, L-allulose to L-fructose and D-tagatose to D-sorbose. The chain is Ketose 3-epimerase from Arthrobacter globiformis.